Reading from the N-terminus, the 229-residue chain is Ion-translocating oxidoreductase complex subunit E (229 aa).

5 helical membrane-spanning segments follow: residues 58-78 (LGLG…ISLF), 82-102 (IPHD…VTTI), 105-125 (LMNA…PLIV), 147-167 (AFDG…LGAI), and 201-221 (GLLL…ILAV).

This sequence belongs to the NqrDE/RnfAE family. In terms of assembly, the complex is composed of six subunits: RnfA, RnfB, RnfC, RnfD, RnfE and RnfG.

Its subcellular location is the cell inner membrane. In terms of biological role, part of a membrane-bound complex that couples electron transfer with translocation of ions across the membrane. The sequence is that of Ion-translocating oxidoreductase complex subunit E from Glaesserella parasuis serovar 5 (strain SH0165) (Haemophilus parasuis).